The chain runs to 312 residues: D-apiose import binding protein (312 aa).

Residues 1–26 (MKASKRWVALAAATLTLFTATGTAQA) form the signal peptide. D-apiofuranose-binding positions include Asn39, 115–116 (DR), 162–164 (DIN), Arg168, Asn218, Asp243, and Gln263.

The protein belongs to the bacterial solute-binding protein 2 family.

The protein resides in the periplasm. Part of an ABC transporter complex involved in D-apiose import. Binds D-apiose, D-ribose and D-ribulose. The protein is D-apiose import binding protein of Paraburkholderia graminis (strain ATCC 700544 / DSM 17151 / LMG 18924 / NCIMB 13744 / C4D1M).